The sequence spans 48 residues: ATP synthase protein 8 (48 aa).

A helical transmembrane segment spans residues Leu-4–Ile-24.

Belongs to the ATPase protein 8 family. F-type ATPases have 2 components, CF(1) - the catalytic core - and CF(0) - the membrane proton channel.

Its subcellular location is the mitochondrion membrane. Mitochondrial membrane ATP synthase (F(1)F(0) ATP synthase or Complex V) produces ATP from ADP in the presence of a proton gradient across the membrane which is generated by electron transport complexes of the respiratory chain. F-type ATPases consist of two structural domains, F(1) - containing the extramembraneous catalytic core and F(0) - containing the membrane proton channel, linked together by a central stalk and a peripheral stalk. During catalysis, ATP synthesis in the catalytic domain of F(1) is coupled via a rotary mechanism of the central stalk subunits to proton translocation. Part of the complex F(0) domain. Minor subunit located with subunit a in the membrane. The chain is ATP synthase protein 8 (atp8) from Aspergillus amstelodami.